We begin with the raw amino-acid sequence, 164 residues long: UPF0114 protein YqhA (164 aa).

3 consecutive transmembrane segments (helical) span residues 15–35 (LLAP…LKFF), 53–73 (LILV…LVMV), and 136–156 (LMWY…MGYL).

This sequence belongs to the UPF0114 family.

It is found in the cell membrane. This chain is UPF0114 protein YqhA, found in Salmonella agona (strain SL483).